Here is a 355-residue protein sequence, read N- to C-terminus: UDP-N-acetylglucosamine--N-acetylmuramyl-(pentapeptide) pyrophosphoryl-undecaprenol N-acetylglucosamine transferase (355 aa).

Residues 14–16 (TGG), Asn123, Arg164, Ser190, and Gln284 contribute to the UDP-N-acetyl-alpha-D-glucosamine site.

Belongs to the glycosyltransferase 28 family. MurG subfamily.

It localises to the cell inner membrane. The catalysed reaction is di-trans,octa-cis-undecaprenyl diphospho-N-acetyl-alpha-D-muramoyl-L-alanyl-D-glutamyl-meso-2,6-diaminopimeloyl-D-alanyl-D-alanine + UDP-N-acetyl-alpha-D-glucosamine = di-trans,octa-cis-undecaprenyl diphospho-[N-acetyl-alpha-D-glucosaminyl-(1-&gt;4)]-N-acetyl-alpha-D-muramoyl-L-alanyl-D-glutamyl-meso-2,6-diaminopimeloyl-D-alanyl-D-alanine + UDP + H(+). Its pathway is cell wall biogenesis; peptidoglycan biosynthesis. Functionally, cell wall formation. Catalyzes the transfer of a GlcNAc subunit on undecaprenyl-pyrophosphoryl-MurNAc-pentapeptide (lipid intermediate I) to form undecaprenyl-pyrophosphoryl-MurNAc-(pentapeptide)GlcNAc (lipid intermediate II). The protein is UDP-N-acetylglucosamine--N-acetylmuramyl-(pentapeptide) pyrophosphoryl-undecaprenol N-acetylglucosamine transferase of Synechocystis sp. (strain ATCC 27184 / PCC 6803 / Kazusa).